We begin with the raw amino-acid sequence, 60 residues long: Single-pass membrane and coiled-coil domain-containing protein 4 homolog (60 aa).

The tract at residues 1–21 (MRKLRGGQTKETRKQKQERRE) is disordered. Basic and acidic residues predominate over residues 8–21 (QTKETRKQKQERRE). A coiled-coil region spans residues 10–33 (KETRKQKQERREENLKIQQQLKTI). The helical transmembrane segment at 32–52 (TIVLPICGVFLMCIVVYVFLK) threads the bilayer.

It belongs to the SMCO4 family.

It is found in the membrane. This chain is Single-pass membrane and coiled-coil domain-containing protein 4 homolog, found in Aedes aegypti (Yellowfever mosquito).